The following is a 269-amino-acid chain: Surfeit locus protein 4 (269 aa).

5 helical membrane-spanning segments follow: residues 64–84 (FLAT…CVLV), 92–112 (YACF…SILW), 179–199 (FFSI…AVGF), 203–223 (LAAL…NAFW), and 242–262 (TTSV…GVSM). The short motif at 266-269 (KKEW) is the Di-lysine motif element.

It belongs to the SURF4 family.

It localises to the endoplasmic reticulum membrane. The protein resides in the endoplasmic reticulum-Golgi intermediate compartment membrane. The protein localises to the golgi apparatus membrane. Endoplasmic reticulum cargo receptor that mediates the export of lipoproteins by recruiting cargos into COPII vesicles to facilitate their secretion. This chain is Surfeit locus protein 4, found in Danio rerio (Zebrafish).